A 420-amino-acid chain; its full sequence is 3-phosphoshikimate 1-carboxyvinyltransferase (420 aa).

The 3-phosphoshikimate site is built by Lys26, Ser27, and Arg31. Lys26 serves as a coordination point for phosphoenolpyruvate. The phosphoenolpyruvate site is built by Gly97 and Arg125. 3-phosphoshikimate contacts are provided by Ser170, Ser171, Gln172, Asp297, Asn320, and Lys324. Gln172 lines the phosphoenolpyruvate pocket. The Proton acceptor role is filled by Asp297. Phosphoenolpyruvate-binding residues include Arg328, Arg375, and Lys400.

It belongs to the EPSP synthase family. Monomer.

The protein resides in the cytoplasm. The catalysed reaction is 3-phosphoshikimate + phosphoenolpyruvate = 5-O-(1-carboxyvinyl)-3-phosphoshikimate + phosphate. It functions in the pathway metabolic intermediate biosynthesis; chorismate biosynthesis; chorismate from D-erythrose 4-phosphate and phosphoenolpyruvate: step 6/7. In terms of biological role, catalyzes the transfer of the enolpyruvyl moiety of phosphoenolpyruvate (PEP) to the 5-hydroxyl of shikimate-3-phosphate (S3P) to produce enolpyruvyl shikimate-3-phosphate and inorganic phosphate. The chain is 3-phosphoshikimate 1-carboxyvinyltransferase from Rhizobium etli (strain ATCC 51251 / DSM 11541 / JCM 21823 / NBRC 15573 / CFN 42).